Reading from the N-terminus, the 182-residue chain is NADH-quinone oxidoreductase subunit I (182 aa).

4Fe-4S ferredoxin-type domains follow at residues 52–82 (LTRDPDGEERCVACNLCAVACPVGCISLQKA) and 92–121 (EFFRINFSRCIFCGLCEEACPTTAIQLTPD). [4Fe-4S] cluster is bound by residues C62, C65, C68, C72, C101, C104, C107, and C111.

This sequence belongs to the complex I 23 kDa subunit family. As to quaternary structure, NDH-1 is composed of 13 different subunits. Subunits NuoA, H, J, K, L, M, N constitute the membrane sector of the complex. It depends on [4Fe-4S] cluster as a cofactor.

It localises to the cell inner membrane. It catalyses the reaction a quinone + NADH + 5 H(+)(in) = a quinol + NAD(+) + 4 H(+)(out). NDH-1 shuttles electrons from NADH, via FMN and iron-sulfur (Fe-S) centers, to quinones in the respiratory chain. The immediate electron acceptor for the enzyme in this species is believed to be ubiquinone. Couples the redox reaction to proton translocation (for every two electrons transferred, four hydrogen ions are translocated across the cytoplasmic membrane), and thus conserves the redox energy in a proton gradient. The protein is NADH-quinone oxidoreductase subunit I of Pseudomonas entomophila (strain L48).